A 391-amino-acid polypeptide reads, in one-letter code: S-adenosylmethionine synthase (391 aa).

H14 is a binding site for ATP. Position 16 (D16) interacts with Mg(2+). E42 provides a ligand contact to K(+). Residues E55 and Q98 each coordinate L-methionine. Residues 98-108 form a flexible loop region; that stretch reads QSADIAMGVDE. Residues 172-174, 238-239, D247, 253-254, A270, and K274 each bind ATP; these read DGK, RF, and RK. D247 serves as a coordination point for L-methionine. K278 is an L-methionine binding site.

The protein belongs to the AdoMet synthase family. As to quaternary structure, homotetramer; dimer of dimers. The cofactor is Mg(2+). K(+) is required as a cofactor.

Its subcellular location is the cytoplasm. It catalyses the reaction L-methionine + ATP + H2O = S-adenosyl-L-methionine + phosphate + diphosphate. The protein operates within amino-acid biosynthesis; S-adenosyl-L-methionine biosynthesis; S-adenosyl-L-methionine from L-methionine: step 1/1. Functionally, catalyzes the formation of S-adenosylmethionine (AdoMet) from methionine and ATP. The overall synthetic reaction is composed of two sequential steps, AdoMet formation and the subsequent tripolyphosphate hydrolysis which occurs prior to release of AdoMet from the enzyme. This is S-adenosylmethionine synthase from Clostridium botulinum (strain Alaska E43 / Type E3).